Here is a 306-residue protein sequence, read N- to C-terminus: Curved DNA-binding protein (306 aa).

The region spanning 5–69 (DYYAIMGVKP…QRRAEYDQMW (65 aa)) is the J domain.

It localises to the cytoplasm. Its subcellular location is the nucleoid. Functionally, DNA-binding protein that preferentially recognizes a curved DNA sequence. It is probably a functional analog of DnaJ; displays overlapping activities with DnaJ, but functions under different conditions, probably acting as a molecular chaperone in an adaptive response to environmental stresses other than heat shock. Lacks autonomous chaperone activity; binds native substrates and targets them for recognition by DnaK. Its activity is inhibited by the binding of CbpM. The sequence is that of Curved DNA-binding protein from Shigella boydii serotype 18 (strain CDC 3083-94 / BS512).